The following is a 91-amino-acid chain: Large ribosomal subunit protein bL27 (91 aa).

The disordered stretch occupies residues 1-26 (MAHKKGVGSSRNGRDSNPKMRGVKRF).

Belongs to the bacterial ribosomal protein bL27 family.

The chain is Large ribosomal subunit protein bL27 from Chloroflexus aurantiacus (strain ATCC 29366 / DSM 635 / J-10-fl).